A 565-amino-acid chain; its full sequence is Glycine--tRNA ligase (565 aa).

The substrate site is built by arginine 98 and glutamate 164. Residues arginine 196–glutamate 198, isoleucine 206–phenylalanine 211, glutamate 323–isoleucine 324, and glycine 440–arginine 443 each bind ATP. Position 211–215 (phenylalanine 211–glutamate 215) interacts with substrate. Position 436 to 440 (glutamate 436 to glycine 440) interacts with substrate.

This sequence belongs to the class-II aminoacyl-tRNA synthetase family.

The protein resides in the cytoplasm. The enzyme catalyses tRNA(Gly) + glycine + ATP = glycyl-tRNA(Gly) + AMP + diphosphate. Catalyzes the attachment of glycine to tRNA(Gly). The protein is Glycine--tRNA ligase of Methanothermobacter thermautotrophicus (strain ATCC 29096 / DSM 1053 / JCM 10044 / NBRC 100330 / Delta H) (Methanobacterium thermoautotrophicum).